We begin with the raw amino-acid sequence, 189 residues long: Elongation factor P 2 (189 aa).

The protein belongs to the elongation factor P family.

Its subcellular location is the cytoplasm. It functions in the pathway protein biosynthesis; polypeptide chain elongation. Its function is as follows. Involved in peptide bond synthesis. Stimulates efficient translation and peptide-bond synthesis on native or reconstituted 70S ribosomes in vitro. Probably functions indirectly by altering the affinity of the ribosome for aminoacyl-tRNA, thus increasing their reactivity as acceptors for peptidyl transferase. The sequence is that of Elongation factor P 2 from Mesorhizobium japonicum (strain LMG 29417 / CECT 9101 / MAFF 303099) (Mesorhizobium loti (strain MAFF 303099)).